A 162-amino-acid polypeptide reads, in one-letter code: uncharacterized protein (162 aa).

A C2H2-type zinc finger spans residues 29 to 50; it reads CPFCDYTNADAKVVRKHVKSKH. The interval 60 to 93 is disordered; sequence KLESQKSKNNGKKQTGQKKQGKGKKQPKRVRETC. The span at 68–87 shows a compositional bias: basic residues; that stretch reads NNGKKQTGQKKQGKGKKQPK.

To M.jannaschii MJECS06.

This is an uncharacterized protein from Methanocaldococcus jannaschii (strain ATCC 43067 / DSM 2661 / JAL-1 / JCM 10045 / NBRC 100440) (Methanococcus jannaschii).